The chain runs to 311 residues: Peptide methionine sulfoxide reductase MsrA/MsrB 2 (311 aa).

Positions 1–155 (MHEIYLAGGC…PNGYCHINVN (155 aa)) are peptide methionine sulfoxide reductase A. Cys10 is an active-site residue. Positions 172 to 295 (DEELKKTLSP…NSLSIRFIPK (124 aa)) constitute a MsrB domain. Catalysis depends on Cys284, which acts as the Nucleophile.

This sequence in the N-terminal section; belongs to the MsrA Met sulfoxide reductase family. The protein in the C-terminal section; belongs to the MsrB Met sulfoxide reductase family.

It carries out the reaction L-methionyl-[protein] + [thioredoxin]-disulfide + H2O = L-methionyl-(S)-S-oxide-[protein] + [thioredoxin]-dithiol. It catalyses the reaction [thioredoxin]-disulfide + L-methionine + H2O = L-methionine (S)-S-oxide + [thioredoxin]-dithiol. The enzyme catalyses L-methionyl-[protein] + [thioredoxin]-disulfide + H2O = L-methionyl-(R)-S-oxide-[protein] + [thioredoxin]-dithiol. In terms of biological role, has an important function as a repair enzyme for proteins that have been inactivated by oxidation. Catalyzes the reversible oxidation-reduction of methionine sulfoxide in proteins to methionine. This is Peptide methionine sulfoxide reductase MsrA/MsrB 2 (msrAB2) from Streptococcus pneumoniae serotype 4 (strain ATCC BAA-334 / TIGR4).